The chain runs to 224 residues: 7-cyano-7-deazaguanine synthase (224 aa).

10–20 (LSGGLDSATVV) lines the ATP pocket. Zn(2+)-binding residues include Cys189, Cys199, Cys202, and Cys205.

The protein belongs to the QueC family. Requires Zn(2+) as cofactor.

It catalyses the reaction 7-carboxy-7-deazaguanine + NH4(+) + ATP = 7-cyano-7-deazaguanine + ADP + phosphate + H2O + H(+). The protein operates within purine metabolism; 7-cyano-7-deazaguanine biosynthesis. Functionally, catalyzes the ATP-dependent conversion of 7-carboxy-7-deazaguanine (CDG) to 7-cyano-7-deazaguanine (preQ(0)). This is 7-cyano-7-deazaguanine synthase from Ectopseudomonas mendocina (strain ymp) (Pseudomonas mendocina).